We begin with the raw amino-acid sequence, 354 residues long: Guanine nucleotide-binding protein alpha-12 subunit (354 aa).

Residues 31–354 enclose the G-alpha domain; the sequence is QPLKLLLLGS…SLLMNVAEIL (324 aa). Residues 34–47 are G1 motif; that stretch reads KLLLLGSGECGKST. GTP contacts are provided by residues 39-46, 178-184, 203-207, 272-275, and Ala-329; these read GSGECGKS, LRVRVKT, DVGGQ, and NKID. 2 residues coordinate Mg(2+): Ser-46 and Thr-184. The segment at 176-184 is G2 motif; the sequence is DFLRVRVKT. Residues 199–208 form a G3 motif region; sequence FKLVDVGGQK. The G4 motif stretch occupies residues 268-275; sequence VLFFNKID. The interval 327–332 is G5 motif; the sequence is TCALDS.

It belongs to the G-alpha family. In terms of assembly, g proteins are composed of 3 units; alpha, beta and gamma. The alpha chain contains the guanine nucleotide binding site.

Functionally, guanine nucleotide-binding proteins (G proteins) are involved as modulators or transducers in various transmembrane signaling systems. This is Guanine nucleotide-binding protein alpha-12 subunit (gpaL) from Dictyostelium discoideum (Social amoeba).